We begin with the raw amino-acid sequence, 99 residues long: MSNSSSNPSKNEYFIKQRDLLIQEISNNLSIVQTNLETLNRSLHESKQIGKEFDDVARLWSTFYDGMNGMNHQTRENTRDENNKISSSDTEDENNNNKI.

Residues 69-99 (GMNHQTRENTRDENNKISSSDTEDENNNNKI) form a disordered region. A compositionally biased stretch (basic and acidic residues) spans 73-83 (QTRENTRDENN). Residues 89 to 99 (DTEDENNNNKI) show a composition bias toward acidic residues.

This sequence belongs to the DASH complex DAD1 family. Component of the DASH complex consisting of ASK1, DAD1, DAD2, DAD3, DAD4, DAM1, DUO1, HSK3, SPC19 and SPC34, with a stoichiometry of one copy of each subunit per complex. Multiple DASH complexes oligomerize to form a ring that encircles spindle microtubules and organizes the rod-like NDC80 complexes of the outer kinetochore. DASH complex oligomerization strengthens microtubule attachments. On cytoplasmic microtubules, DASH complexes appear to form patches instead of rings.

The protein resides in the chromosome. Its subcellular location is the centromere. It is found in the kinetochore. The protein localises to the cytoplasm. It localises to the cytoskeleton. The protein resides in the spindle. Its subcellular location is the nucleus. Component of the DASH complex that connects microtubules with kinetochores and couples microtubule depolymerisation to chromosome movement; it is involved in retrieving kinetochores to the spindle poles before their re-orientation on the spindle in early mitosis and allows microtubule depolymerization to pull chromosomes apart and resist detachment during anaphase. Kinetochores, consisting of a centromere-associated inner segment and a microtubule-contacting outer segment, play a crucial role in chromosome segregation by mediating the physical connection between centromeric DNA and microtubules. Kinetochores also serve as an input point for the spindle assembly checkpoint, which delays anaphase until all chromosomes have bioriented on the mitotic spindle. The chain is DASH complex subunit DAD1 from Candida albicans (strain SC5314 / ATCC MYA-2876) (Yeast).